The sequence spans 207 residues: Recombination protein RecR (207 aa).

The C4-type zinc-finger motif lies at 60–75 (CRHCHNISDSDVCTIC). Residues 83–178 (STLCVVENIR…RVSVIARGIA (96 aa)) form the Toprim domain.

It belongs to the RecR family.

May play a role in DNA repair. It seems to be involved in an RecBC-independent recombinational process of DNA repair. It may act with RecF and RecO. This is Recombination protein RecR from Porphyromonas gingivalis (strain ATCC BAA-308 / W83).